A 364-amino-acid polypeptide reads, in one-letter code: Lipid-A-disaccharide synthase (364 aa).

Belongs to the LpxB family.

It catalyses the reaction a lipid X + a UDP-2-N,3-O-bis[(3R)-3-hydroxyacyl]-alpha-D-glucosamine = a lipid A disaccharide + UDP + H(+). It participates in bacterial outer membrane biogenesis; LPS lipid A biosynthesis. Its function is as follows. Condensation of UDP-2,3-diacylglucosamine and 2,3-diacylglucosamine-1-phosphate to form lipid A disaccharide, a precursor of lipid A, a phosphorylated glycolipid that anchors the lipopolysaccharide to the outer membrane of the cell. The chain is Lipid-A-disaccharide synthase from Campylobacter jejuni (strain RM1221).